Reading from the N-terminus, the 297-residue chain is Protoheme IX farnesyltransferase (297 aa).

A run of 9 helical transmembrane segments spans residues 23 to 43 (VTQL…PGLP), 49 to 69 (VFGT…NCLI), 90 to 110 (ISAA…MLVL), 117 to 137 (LTMW…TVIL), 144 to 164 (NIVI…AAVA), 171 to 191 (AWVL…ALAL), 215 to 235 (RLHI…PYII), 238 to 258 (SGLL…AYAW), and 277 to 297 (ILYL…GLLA).

Belongs to the UbiA prenyltransferase family. Protoheme IX farnesyltransferase subfamily.

It localises to the cell inner membrane. The catalysed reaction is heme b + (2E,6E)-farnesyl diphosphate + H2O = Fe(II)-heme o + diphosphate. The protein operates within porphyrin-containing compound metabolism; heme O biosynthesis; heme O from protoheme: step 1/1. Functionally, converts heme B (protoheme IX) to heme O by substitution of the vinyl group on carbon 2 of heme B porphyrin ring with a hydroxyethyl farnesyl side group. This Bordetella petrii (strain ATCC BAA-461 / DSM 12804 / CCUG 43448) protein is Protoheme IX farnesyltransferase.